Here is a 140-residue protein sequence, read N- to C-terminus: Ribosome-binding factor A (140 aa).

Belongs to the RbfA family. In terms of assembly, monomer. Binds 30S ribosomal subunits, but not 50S ribosomal subunits or 70S ribosomes.

It localises to the cytoplasm. Its function is as follows. One of several proteins that assist in the late maturation steps of the functional core of the 30S ribosomal subunit. Associates with free 30S ribosomal subunits (but not with 30S subunits that are part of 70S ribosomes or polysomes). Required for efficient processing of 16S rRNA. May interact with the 5'-terminal helix region of 16S rRNA. The sequence is that of Ribosome-binding factor A from Cereibacter sphaeroides (strain ATCC 17023 / DSM 158 / JCM 6121 / CCUG 31486 / LMG 2827 / NBRC 12203 / NCIMB 8253 / ATH 2.4.1.) (Rhodobacter sphaeroides).